Reading from the N-terminus, the 359-residue chain is Beta-1,3-galactosyltransferase bre-2 (359 aa).

Over 1 to 11 (MRQSRRASSRV) the chain is Cytoplasmic. A helical; Signal-anchor for type II membrane protein membrane pass occupies residues 12-29 (NRLVVIFIIVASGFLLLY). Residues 30–359 (KNTQQFTQID…NPDLEELKEK (330 aa)) lie on the Lumenal side of the membrane. N-linked (GlcNAc...) asparagine glycans are attached at residues N73, N163, and N209.

Belongs to the glycosyltransferase 31 family.

It is found in the golgi apparatus membrane. Its pathway is protein modification; protein glycosylation. Transfers N-acetylgalactosamine onto carbohydrate substrates. Involved in susceptibility to pore-forming crystal toxins in conjunction with bre-1, bre-3, bre-4, and bre-5. Involved in resistance to the nematotoxic C.cinerea galectin Cgl2. In Caenorhabditis elegans, this protein is Beta-1,3-galactosyltransferase bre-2.